A 1493-amino-acid polypeptide reads, in one-letter code: ABC transporter C family member 7 (1493 aa).

Transmembrane regions (helical) follow at residues 21-41 (FPMFSIFFNLLLLLVMFGSCV), 70-90 (VVICCETLSALNSVLLLLSCF), 102-122 (LMILLDLLFTALSWGAISFYI), 140-160 (VWWVLYFMFSCYRLLVDIALY), 165-185 (LVSVHLLLSDVLAVSVGLFLC), 309-329 (ILLSTLFAFVYTVSCYVAPYL), 343-360 (YSNQGVVLVTTFFVAKLV), 423-443 (WYMHDPWILVLQISLALLILY), 448-468 (LGSIAAFAATFLVMLGNIPLA), and 535-555 (SVLWAAPSFVSATAFGACMLL). The ABC transmembrane type-1 1 domain maps to 309 to 590 (ILLSTLFAFV…LPDTISMIVQ (282 aa)). An ABC transporter 1 domain is found at 624-847 (VEVSNGAFSW…GTDFMELVGA (224 aa)). 659 to 666 (GTVGSGKS) contributes to the ATP binding site. Positions 863–898 (ASAQSTTSKESKVSNDEEKQEEDLPSPKGQLVQEEE) are disordered. Serine 888 bears the Phosphoserine mark. 6 helical membrane passes run 915 to 935 (LAYGGALVPIILVVQILFQVL), 959 to 979 (GSTLILVYVFLATASSFCILV), 1038 to 1055 (FSNLAIAAVNILGIIGVM), 1059 to 1081 (AWQVLIVFIPVIAACTWYRQYYI), 1153 to 1173 (LSTVAFALSLVILVSVPEGVI), and 1177 to 1197 (FAGLAVTYALNLNSLQATLIW). One can recognise an ABC transmembrane type-1 2 domain in the interval 922–1204 (VPIILVVQIL…LIWTLCDLEN (283 aa)). Residues 1241–1475 (ITICNLQVRY…KSSSFSKLVA (235 aa)) form the ABC transporter 2 domain. An ATP-binding site is contributed by 1275–1282 (GRTGCGKS).

Belongs to the ABC transporter superfamily. ABCC family. Conjugate transporter (TC 3.A.1.208) subfamily. Ubiquitous.

Its subcellular location is the membrane. It catalyses the reaction ATP + H2O + xenobioticSide 1 = ADP + phosphate + xenobioticSide 2.. Pump for glutathione S-conjugates. This is ABC transporter C family member 7 (ABCC7) from Arabidopsis thaliana (Mouse-ear cress).